The primary structure comprises 696 residues: Methionine--tRNA ligase (696 aa).

Positions proline 12–histidine 22 match the 'HIGH' region motif. 4 residues coordinate Zn(2+): cysteine 143, cysteine 146, cysteine 156, and cysteine 159. The 'KMSKS' region signature appears at lysine 336–serine 340. ATP is bound at residue lysine 339. The interval serine 556 to glutamate 580 is disordered. In terms of domain architecture, tRNA-binding spans aspartate 591–lysine 696.

This sequence belongs to the class-I aminoacyl-tRNA synthetase family. MetG type 1 subfamily. In terms of assembly, homodimer. Requires Zn(2+) as cofactor.

The protein localises to the cytoplasm. The catalysed reaction is tRNA(Met) + L-methionine + ATP = L-methionyl-tRNA(Met) + AMP + diphosphate. In terms of biological role, is required not only for elongation of protein synthesis but also for the initiation of all mRNA translation through initiator tRNA(fMet) aminoacylation. The sequence is that of Methionine--tRNA ligase from Dechloromonas aromatica (strain RCB).